The following is a 651-amino-acid chain: Probable Xaa-Pro aminopeptidase P (651 aa).

Residues Asp-448, Asp-459, Glu-557, and Glu-571 each coordinate Mn(2+).

The protein belongs to the peptidase M24B family. Requires Mn(2+) as cofactor.

The enzyme catalyses Release of any N-terminal amino acid, including proline, that is linked to proline, even from a dipeptide or tripeptide.. Functionally, catalyzes the removal of a penultimate prolyl residue from the N-termini of peptides. The polypeptide is Probable Xaa-Pro aminopeptidase P (AMPP) (Coccidioides posadasii (strain C735) (Valley fever fungus)).